We begin with the raw amino-acid sequence, 647 residues long: Threonine--tRNA ligase (647 aa).

A TGS domain is found at 1–61 (MINITFPDGA…TEDGSIEIVT (61 aa)). The interval 242–540 (DHRKLGKELD…LIENYKGAFP (299 aa)) is catalytic. Zn(2+) contacts are provided by C336, H387, and H517.

This sequence belongs to the class-II aminoacyl-tRNA synthetase family. As to quaternary structure, homodimer. The cofactor is Zn(2+).

It is found in the cytoplasm. The enzyme catalyses tRNA(Thr) + L-threonine + ATP = L-threonyl-tRNA(Thr) + AMP + diphosphate + H(+). In terms of biological role, catalyzes the attachment of threonine to tRNA(Thr) in a two-step reaction: L-threonine is first activated by ATP to form Thr-AMP and then transferred to the acceptor end of tRNA(Thr). Also edits incorrectly charged L-seryl-tRNA(Thr). The chain is Threonine--tRNA ligase from Streptococcus pneumoniae (strain P1031).